The sequence spans 461 residues: Argininosuccinate lyase (461 aa).

It belongs to the lyase 1 family. Argininosuccinate lyase subfamily.

Its subcellular location is the cytoplasm. It catalyses the reaction 2-(N(omega)-L-arginino)succinate = fumarate + L-arginine. Its pathway is amino-acid biosynthesis; L-arginine biosynthesis; L-arginine from L-ornithine and carbamoyl phosphate: step 3/3. This chain is Argininosuccinate lyase, found in Streptococcus gordonii (strain Challis / ATCC 35105 / BCRC 15272 / CH1 / DL1 / V288).